We begin with the raw amino-acid sequence, 267 residues long: Lectin SfL-2 (267 aa).

4 repeat units span residues 1–67 (GRYT…RRGE), 68–135 (SNNY…QAEG), 136–202 (DTYN…LTGA), and 203–267 (NNYK…GVAN). The 4 X approximate tandem repeats stretch occupies residues 1 to 267 (GRYTVQNQWG…GPIGFKGVAN (267 aa)).

Monomer.

Its function is as follows. Lectin specific for high mannose N-glycans, recognizes the branched moiety of these glycans. Does not recognize other types of N-glycans or monosaccharides. This is Lectin SfL-2 from Solieria filiformis (Red alga).